The chain runs to 874 residues: Leucine--tRNA ligase (874 aa).

A 'HIGH' region motif is present at residues 43 to 53 (PYPSGRIHIGH). Positions 630-634 (KMSKS) match the 'KMSKS' region motif. Lysine 633 is an ATP binding site.

This sequence belongs to the class-I aminoacyl-tRNA synthetase family.

The protein resides in the cytoplasm. It carries out the reaction tRNA(Leu) + L-leucine + ATP = L-leucyl-tRNA(Leu) + AMP + diphosphate. The chain is Leucine--tRNA ligase from Bradyrhizobium diazoefficiens (strain JCM 10833 / BCRC 13528 / IAM 13628 / NBRC 14792 / USDA 110).